Here is a 647-residue protein sequence, read N- to C-terminus: MPDPATYRPAPGSIPVEPGVYRFRDPHGRVIYVGKAKSLRSRLTSYFADVANLHPRTRQMVTTAAKVEWTVVNTEVEALQLEYNWIKEFDPRFNVRYRDDKSYPVLAVTLNEEFPRLMVYRGPRRKGVRYFGPYSHAWAIRETLDLLTRVFPARTCSAGVFKRHKQIDRPCLLGYIDKCSAPCIGRVSAEQHRQIVDDFCDFLSGKTDRFARELEQQMNAAAAELDFERAARLRDDLGALKRAMEKQAVVLGDGTDADVVAFADDELEAAVQVFHVRGGRVRGQRGWIVEKSADPGDSGEEQLVEQFLTQFYGEQAELGGAADESVNPVPREVLVPCLPSNADELTSWLSGLRGSRVALRVPRRGDKRALAETVQRNAKEALQQHKLKRAGDFNARSAALQNIQEALGLSEAPLRIECVDISHVQGTDVVGSLVVFEDGLPRKSDYRHFAIREAAGQGRSDDVASIAEVTRRRFARHLSEQNDPNMLSPEGKSRRFAYPPNLYVVDGGAPQVNAASAVLEELGITDVAVIGLAKRLEEVWVPSEPDPVIMPRNSEGLYLLQRVRDEAHRFAITYHRSKRSKRMTASVLDSVPGLGEHRRKALVSHFGSIARLKEATVDQITAVPGIGVATATAVLEALRPDESKAAP.

In terms of domain architecture, GIY-YIG spans 16–95 (VEPGVYRFRD…IKEFDPRFNV (80 aa)). The UVR domain maps to 208 to 243 (DRFARELEQQMNAAAAELDFERAARLRDDLGALKRA).

Belongs to the UvrC family. Interacts with UvrB in an incision complex.

It is found in the cytoplasm. The UvrABC repair system catalyzes the recognition and processing of DNA lesions. UvrC both incises the 5' and 3' sides of the lesion. The N-terminal half is responsible for the 3' incision and the C-terminal half is responsible for the 5' incision. The sequence is that of UvrABC system protein C from Mycolicibacterium paratuberculosis (strain ATCC BAA-968 / K-10) (Mycobacterium paratuberculosis).